We begin with the raw amino-acid sequence, 116 residues long: Diuretic hormone class 2 (116 aa).

The N-terminal stretch at 1–25 (MTNRCACFALAFLLFCLLAISSIEA) is a signal peptide. Residues 26-75 (APMPSQSNGGYGGAGYNELEEVPDDLLMELMTRFGRTIIRARNDLENSKR) constitute a propeptide that is removed on maturation. Pro-106 is subject to Proline amide. The propeptide occupies 112–116 (SETDV).

The protein resides in the secreted. Functionally, regulation of fluid secretion. Stimulates Malpighian tubules fluid secretion by activating the apical membrane V-ATPase via cyclic AMP of principal cells in the main secretory segment. The polypeptide is Diuretic hormone class 2 (Dh31) (Drosophila melanogaster (Fruit fly)).